A 364-amino-acid polypeptide reads, in one-letter code: tRNA 2-selenouridine synthase (364 aa).

One can recognise a Rhodanese domain in the interval 14-137 (LIADTPIIDV…LRQTAIQATI (124 aa)). The active-site S-selanylcysteine intermediate is cysteine 97.

This sequence belongs to the SelU family. In terms of assembly, monomer.

It catalyses the reaction 5-methylaminomethyl-2-thiouridine(34) in tRNA + selenophosphate + (2E)-geranyl diphosphate + H2O + H(+) = 5-methylaminomethyl-2-selenouridine(34) in tRNA + (2E)-thiogeraniol + phosphate + diphosphate. The catalysed reaction is 5-methylaminomethyl-2-thiouridine(34) in tRNA + (2E)-geranyl diphosphate = 5-methylaminomethyl-S-(2E)-geranyl-thiouridine(34) in tRNA + diphosphate. The enzyme catalyses 5-methylaminomethyl-S-(2E)-geranyl-thiouridine(34) in tRNA + selenophosphate + H(+) = 5-methylaminomethyl-2-(Se-phospho)selenouridine(34) in tRNA + (2E)-thiogeraniol. It carries out the reaction 5-methylaminomethyl-2-(Se-phospho)selenouridine(34) in tRNA + H2O = 5-methylaminomethyl-2-selenouridine(34) in tRNA + phosphate. Involved in the post-transcriptional modification of the uridine at the wobble position (U34) of tRNA(Lys), tRNA(Glu) and tRNA(Gln). Catalyzes the conversion of 2-thiouridine (S2U-RNA) to 2-selenouridine (Se2U-RNA). Acts in a two-step process involving geranylation of 2-thiouridine (S2U) to S-geranyl-2-thiouridine (geS2U) and subsequent selenation of the latter derivative to 2-selenouridine (Se2U) in the tRNA chain. The protein is tRNA 2-selenouridine synthase of Escherichia coli O45:K1 (strain S88 / ExPEC).